A 120-amino-acid chain; its full sequence is UPF0231 protein YacL (120 aa).

It belongs to the UPF0231 family.

This chain is UPF0231 protein YacL, found in Escherichia coli O139:H28 (strain E24377A / ETEC).